Consider the following 355-residue polypeptide: Probable dual-specificity RNA methyltransferase RlmN (355 aa).

Residues 1–20 form a disordered region; that stretch reads MSATPVTQLTPSSQPQQPCS. The active-site Proton acceptor is glutamate 107. Residues 113 to 341 form the Radical SAM core domain; it reads TDKRLTVCVS…VSVRYSRGLE (229 aa). Cysteine 120 and cysteine 346 are oxidised to a cystine. The [4Fe-4S] cluster site is built by cysteine 127, cysteine 131, and cysteine 134. Residues 174-175, serine 204, 227-229, and asparagine 303 contribute to the S-adenosyl-L-methionine site; these read GE and SLH. Cysteine 346 functions as the S-methylcysteine intermediate in the catalytic mechanism.

The protein belongs to the radical SAM superfamily. RlmN family. [4Fe-4S] cluster serves as cofactor.

It localises to the cytoplasm. The enzyme catalyses adenosine(2503) in 23S rRNA + 2 reduced [2Fe-2S]-[ferredoxin] + 2 S-adenosyl-L-methionine = 2-methyladenosine(2503) in 23S rRNA + 5'-deoxyadenosine + L-methionine + 2 oxidized [2Fe-2S]-[ferredoxin] + S-adenosyl-L-homocysteine. The catalysed reaction is adenosine(37) in tRNA + 2 reduced [2Fe-2S]-[ferredoxin] + 2 S-adenosyl-L-methionine = 2-methyladenosine(37) in tRNA + 5'-deoxyadenosine + L-methionine + 2 oxidized [2Fe-2S]-[ferredoxin] + S-adenosyl-L-homocysteine. Specifically methylates position 2 of adenine 2503 in 23S rRNA and position 2 of adenine 37 in tRNAs. In Nostoc sp. (strain PCC 7120 / SAG 25.82 / UTEX 2576), this protein is Probable dual-specificity RNA methyltransferase RlmN.